The primary structure comprises 351 residues: tRNA pseudouridine synthase D (351 aa).

Residue Asp81 is the Nucleophile of the active site. In terms of domain architecture, TRUD spans Gly158–Leu304.

Belongs to the pseudouridine synthase TruD family.

It carries out the reaction uridine(13) in tRNA = pseudouridine(13) in tRNA. Functionally, responsible for synthesis of pseudouridine from uracil-13 in transfer RNAs. The chain is tRNA pseudouridine synthase D from Aliivibrio fischeri (strain ATCC 700601 / ES114) (Vibrio fischeri).